A 333-amino-acid polypeptide reads, in one-letter code: BRISC and BRCA1-A complex member 1 (333 aa).

The residue at position 1 (M1) is an N-acetylmethionine. The segment at 1-85 (MEVAEANSPT…PWQVPASASE (85 aa)) is disordered. At S8 the chain carries Phosphoserine. Over residues 10–24 (TEEEEEEEEEGEETI) the composition is skewed to acidic residues. Phosphoserine occurs at positions 33 and 53. Low complexity predominate over residues 58-67 (EAATADGGAA). The interval 99 to 302 (VIICLDLSEE…LELHNCMAKL (204 aa)) is VWFA-like.

This sequence belongs to the BABAM1 family. Component of the ARISC complex, at least composed of UIMC1/RAP80, ABRAXAS1, BRCC3/BRCC36, BABAM2 and BABAM1/NBA1. Component of the BRCA1-A complex, at least composed of BRCA1, BARD1, UIMC1/RAP80, ABRAXAS1, BRCC3/BRCC36, BABAM2 and BABAM1/NBA1. In the BRCA1-A complex, interacts directly with ABRAXAS1 and BABAM2. Component of the BRISC complex, at least composed of ABRAXAS2, BRCC3/BRCC36, BABAM2 and BABAM1/NBA1. Identified in a complex with SHMT2 and the other subunits of the BRISC complex.

It is found in the cytoplasm. Its subcellular location is the nucleus. Its function is as follows. Component of the BRCA1-A complex, a complex that specifically recognizes 'Lys-63'-linked ubiquitinated histones H2A and H2AX at DNA lesions sites, leading to target the BRCA1-BARD1 heterodimer to sites of DNA damage at double-strand breaks (DSBs). The BRCA1-A complex also possesses deubiquitinase activity that specifically removes 'Lys-63'-linked ubiquitin on histones H2A and H2AX. In the BRCA1-A complex, it is required for the complex integrity and its localization at DSBs. Component of the BRISC complex, a multiprotein complex that specifically cleaves 'Lys-63'-linked ubiquitin in various substrates. In these 2 complexes, it is probably required to maintain the stability of BABAM2 and help the 'Lys-63'-linked deubiquitinase activity mediated by BRCC3/BRCC36 component. The BRISC complex is required for normal mitotic spindle assembly and microtubule attachment to kinetochores via its role in deubiquitinating NUMA1. Plays a role in interferon signaling via its role in the deubiquitination of the interferon receptor IFNAR1; deubiquitination increases IFNAR1 activity by enhancing its stability and cell surface expression. Down-regulates the response to bacterial lipopolysaccharide (LPS) via its role in IFNAR1 deubiquitination. The sequence is that of BRISC and BRCA1-A complex member 1 (Babam1) from Mus musculus (Mouse).